The chain runs to 261 residues: Mlc titration factor A (261 aa).

Zn(2+) contacts are provided by His-111, His-148, His-152, and Glu-211.

This sequence belongs to the MtfA family. Interacts with Mlc. Requires Zn(2+) as cofactor.

It localises to the cytoplasm. In terms of biological role, involved in the modulation of the activity of the glucose-phosphotransferase system (glucose-PTS). Interacts with the transcriptional repressor Mlc, preventing its interaction with DNA and leading to the modulation of expression of genes regulated by Mlc, including ptsG, which encodes the PTS system glucose-specific EIICB component. Shows zinc-dependent metallopeptidase activity. This Edwardsiella ictaluri (strain 93-146) protein is Mlc titration factor A.